Reading from the N-terminus, the 180-residue chain is MTAGTVLLLAGALGTDAFSLCLGLGLNGFRRRMAWMLVGLIVALHVVLPVAGWYAGEFTGRLVGRWAAYLGAAILFYLGVKMVRESLAEGRTATGKLERAGFLGLTVLAGSVSMDALSVGFTLGTAGAALLLTAGVIGLVAGLMSAAAFVLAHRVEDWVGRRAELLGGLVLIGVGLRLLF.

5 helical membrane passes run 6–26, 33–53, 63–83, 101–121, and 130–150; these read VLLL…GLGL, MAWM…VAGW, VGRW…VKMV, GFLG…SVGF, and LLLT…AAFV.

This sequence belongs to the MntP (TC 9.B.29) family.

Its subcellular location is the cell membrane. Functionally, probably functions as a manganese efflux pump. The protein is Putative manganese efflux pump MntP of Desulforudis audaxviator (strain MP104C).